Here is a 112-residue protein sequence, read N- to C-terminus: cAMP-regulated phosphoprotein 19 (112 aa).

Met1 bears the N-acetylmethionine mark. The segment covering 1–11 (MSAEVPEAASA) has biased composition (low complexity). The tract at residues 1–49 (MSAEVPEAASAEEQKEMEDKVTSPEKAEEAKLKARYPHLGQKPGGSDFL) is disordered. Ser2 is subject to N-acetylserine. 2 positions are modified to phosphoserine: Ser2 and Ser23. The span at 12-32 (EEQKEMEDKVTSPEKAEEAKL) shows a compositional bias: basic and acidic residues. 2 positions are modified to phosphoserine; by GWL: Ser62 and Ser104. A disordered region spans residues 74-112 (NKQLPAAAPDKTEVTGDHIPTPQDLPQRKPSLVASKLAG). Ser104 carries the phosphoserine; by PKA modification. Position 109 is an N6-acetyllysine (Lys109).

This sequence belongs to the endosulfine family. Interacts (when phosphorylated at Ser-62) with PPP2R2D. Interacts with SNCA. Interacts with PPP2R2A; the interaction is direct and this interaction inhibits PP2A activity. Post-translationally, phosphorylation at Ser-62 by MASTL/GWL during mitosis is essential for interaction with PPP2R2D (PR55-delta) and subsequent inactivation of PP2A. Phosphorylated by PKA.

The protein resides in the cytoplasm. Its function is as follows. Protein phosphatase inhibitor that specifically inhibits protein phosphatase 2A (PP2A) during mitosis. Inhibition of PP2A is enhanced when ARPP19 is phosphorylated. When phosphorylated at Ser-62 during mitosis, specifically interacts with PPP2R2D (PR55-delta) and inhibits its activity, leading to inactivation of PP2A, an essential condition to keep cyclin-B1-CDK1 activity high during M phase. May indirectly enhance GAP-43 expression by binding to the NGF-regulatory region of its mRNA. The protein is cAMP-regulated phosphoprotein 19 (Arpp19) of Mus musculus (Mouse).